A 304-amino-acid chain; its full sequence is 1D-myo-inositol 2-acetamido-2-deoxy-alpha-D-glucopyranoside deacetylase 2 (304 aa).

The Zn(2+) site is built by H17, D20, and H152.

Belongs to the MshB deacetylase family. Requires Zn(2+) as cofactor.

The enzyme catalyses 1D-myo-inositol 2-acetamido-2-deoxy-alpha-D-glucopyranoside + H2O = 1D-myo-inositol 2-amino-2-deoxy-alpha-D-glucopyranoside + acetate. Catalyzes the deacetylation of 1D-myo-inositol 2-acetamido-2-deoxy-alpha-D-glucopyranoside (GlcNAc-Ins) in the mycothiol biosynthesis pathway. This chain is 1D-myo-inositol 2-acetamido-2-deoxy-alpha-D-glucopyranoside deacetylase 2, found in Catenulispora acidiphila (strain DSM 44928 / JCM 14897 / NBRC 102108 / NRRL B-24433 / ID139908).